Reading from the N-terminus, the 334-residue chain is MSLDIDQIALHQLIKRDEQTLDVVLRDSLLPTNAVVEEMMAELHRVYSAKSKAYGLFNEQSELADALKRSRKGDEDFLSFSRAATGRLRDELAKYPFAEGGVVLFCQYRYLAVEYLLISVLSSCHSMRVNEQLDLSTTHYLDINRADIVARIDLTEWETNPESTRYLTFLTGRVGRKVSDFFMDFLSAAEGLDTKAQNRGLLQAVDDYCADAELGKNERQAYRQQVYSYCNEQLQAGEEIALQVLAQELPKLGEKDFQQFSAEQGYALEESFPADRGTLRQLTKFAGSGGGLSINFDALLLDERIFWDAATDTLTIKGTPPNLRDQLQRRAGSK.

The protein belongs to the YejK family.

The protein localises to the cytoplasm. The protein resides in the nucleoid. This is Nucleoid-associated protein YPN_2714 from Yersinia pestis bv. Antiqua (strain Nepal516).